Consider the following 141-residue polypeptide: Large ribosomal subunit protein uL11c (141 aa).

This sequence belongs to the universal ribosomal protein uL11 family. In terms of assembly, part of the ribosomal stalk of the 50S ribosomal subunit. Interacts with L10 and the large rRNA to form the base of the stalk. L10 forms an elongated spine to which L12 dimers bind in a sequential fashion forming a multimeric L10(L12)X complex.

It localises to the plastid. The protein localises to the cyanelle. Its function is as follows. Forms part of the ribosomal stalk which helps the ribosome interact with GTP-bound translation factors. This chain is Large ribosomal subunit protein uL11c, found in Cyanophora paradoxa.